The primary structure comprises 475 residues: Protein translocase subunit SecD (475 aa).

6 consecutive transmembrane segments (helical) span residues 7 to 27 (LLIT…SLKF), 313 to 333 (KGFM…FIYY), 338 to 358 (LIAD…MAYL), 364 to 384 (LPGV…NVLI), 410 to 430 (FWTI…LFQF), and 437 to 457 (GFAV…VTVT).

The protein belongs to the SecD/SecF family. SecD subfamily. As to quaternary structure, forms a complex with SecF. Part of the essential Sec protein translocation apparatus which comprises SecA, SecYEG and auxiliary proteins SecDF. Other proteins may also be involved.

The protein localises to the cell inner membrane. Part of the Sec protein translocase complex. Interacts with the SecYEG preprotein conducting channel. SecDF uses the proton motive force (PMF) to complete protein translocation after the ATP-dependent function of SecA. The chain is Protein translocase subunit SecD from Endomicrobium trichonymphae.